Consider the following 1020-residue polypeptide: Carbamoyl phosphate synthase arginine-specific large chain (1020 aa).

Residues 1–401 (MPKNNAIHSI…ATLKAIASLE (401 aa)) form a carboxyphosphate synthetic domain region. ATP-binding residues include arginine 129, arginine 169, glycine 175, glycine 176, glutamine 208, isoleucine 210, glutamate 215, glycine 241, isoleucine 242, histidine 243, glutamine 284, and glutamate 298. The region spanning 133–327 (KTLMKRLHQP…IAKIAADIAI (195 aa)) is the ATP-grasp 1 domain. Residues glutamine 284, glutamate 298, and asparagine 300 each contribute to the Mg(2+) site. Mn(2+) is bound by residues glutamine 284, glutamate 298, and asparagine 300. Oligomerization domain stretches follow at residues 402-542 (IDPK…FGQT) and 402-544 (IDPK…QTNE). 2 carbamoyl phosphate synthetic domain regions span residues 543–927 (NESH…ADSY) and 544–927 (ESHP…ADSY). In terms of domain architecture, ATP-grasp 2 spans 669–858 (ADCLRLLKIA…LAQLATRLIL (190 aa)). ATP-binding residues include arginine 705, glutamine 744, leucine 746, glutamate 750, glycine 775, valine 776, histidine 777, serine 778, and glutamine 818. Glutamine 818 and asparagine 831 together coordinate Mg(2+). Residues glutamine 818 and asparagine 831 each contribute to the Mn(2+) site. One can recognise an MGS-like domain in the interval 927 to 1020 (YHLETWQTVD…LAVTPTPATI (94 aa)). Residues 928–1020 (HLETWQTVDG…LAVTPTPATI (93 aa)) form an allosteric domain region.

It belongs to the CarB family. Composed of two chains; the small (or glutamine) chain promotes the hydrolysis of glutamine to ammonia, which is used by the large (or ammonia) chain to synthesize carbamoyl phosphate. Tetramer of heterodimers (alpha,beta)4. Mg(2+) serves as cofactor. Mn(2+) is required as a cofactor.

It catalyses the reaction hydrogencarbonate + L-glutamine + 2 ATP + H2O = carbamoyl phosphate + L-glutamate + 2 ADP + phosphate + 2 H(+). The enzyme catalyses hydrogencarbonate + NH4(+) + 2 ATP = carbamoyl phosphate + 2 ADP + phosphate + 2 H(+). It functions in the pathway amino-acid biosynthesis; L-arginine biosynthesis; carbamoyl phosphate from bicarbonate: step 1/1. Its function is as follows. Large subunit of the glutamine-dependent carbamoyl phosphate synthetase (CPSase). CPSase catalyzes the formation of carbamoyl phosphate from the ammonia moiety of glutamine, carbonate, and phosphate donated by ATP, constituting the first step of the biosynthetic pathway leading to arginine and/or urea. The large subunit (synthetase) binds the substrates ammonia (free or transferred from glutamine from the small subunit), hydrogencarbonate and ATP and carries out an ATP-coupled ligase reaction, activating hydrogencarbonate by forming carboxy phosphate which reacts with ammonia to form carbamoyl phosphate. The polypeptide is Carbamoyl phosphate synthase arginine-specific large chain (Lactiplantibacillus plantarum (strain ATCC BAA-793 / NCIMB 8826 / WCFS1) (Lactobacillus plantarum)).